We begin with the raw amino-acid sequence, 779 residues long: Beta-galactosidase 15 (779 aa).

An N-terminal signal peptide occupies residues 1–19 (MVSLSFILCCVLVSSCAYA). Asn148 is a glycosylation site (N-linked (GlcNAc...) asparagine). Glu178 acts as the Proton donor in catalysis. Glu247 (nucleophile) is an active-site residue. Residues Asn248, Asn345, Asn374, Asn489, Asn495, and Asn555 are each glycosylated (N-linked (GlcNAc...) asparagine). One can recognise an SUEL-type lectin domain in the interval 694–779 (VYEKNVLELS…AKRLAVEAIC (86 aa)).

It belongs to the glycosyl hydrolase 35 family. As to expression, ubiquitous, with higher levels in roots and siliques.

It localises to the secreted. Its subcellular location is the extracellular space. The protein localises to the apoplast. The enzyme catalyses Hydrolysis of terminal non-reducing beta-D-galactose residues in beta-D-galactosides.. The chain is Beta-galactosidase 15 (BGAL15) from Arabidopsis thaliana (Mouse-ear cress).